We begin with the raw amino-acid sequence, 193 residues long: Lipid A acyltransferase PagP (193 aa).

Positions 1–32 are cleaved as a signal peptide; the sequence is MNGMAVVMIIRKYFLIIALLVMPWLAIPSVSA. Residues His65, Asp108, and Ser109 contribute to the active site.

It belongs to the lipid A palmitoyltransferase family. As to quaternary structure, homodimer.

The protein localises to the cell outer membrane. The catalysed reaction is a lipid A + a 1,2-diacyl-sn-glycero-3-phosphocholine = a hepta-acyl lipid A + a 2-acyl-sn-glycero-3-phosphocholine. It carries out the reaction a lipid IVA + a 1,2-diacyl-sn-glycero-3-phosphocholine = a lipid IVB + a 2-acyl-sn-glycero-3-phosphocholine. The enzyme catalyses a lipid IIA + a 1,2-diacyl-sn-glycero-3-phosphocholine = a lipid IIB + a 2-acyl-sn-glycero-3-phosphocholine. Functionally, transfers a fatty acid residue from the sn-1 position of a phospholipid to the N-linked hydroxyfatty acid chain on the proximal unit of lipid A or its precursors. The chain is Lipid A acyltransferase PagP from Salmonella paratyphi C (strain RKS4594).